The sequence spans 415 residues: Gamma-glutamyl phosphate reductase (415 aa).

Belongs to the gamma-glutamyl phosphate reductase family.

Its subcellular location is the cytoplasm. The catalysed reaction is L-glutamate 5-semialdehyde + phosphate + NADP(+) = L-glutamyl 5-phosphate + NADPH + H(+). Its pathway is amino-acid biosynthesis; L-proline biosynthesis; L-glutamate 5-semialdehyde from L-glutamate: step 2/2. Catalyzes the NADPH-dependent reduction of L-glutamate 5-phosphate into L-glutamate 5-semialdehyde and phosphate. The product spontaneously undergoes cyclization to form 1-pyrroline-5-carboxylate. This Bacillus cereus (strain B4264) protein is Gamma-glutamyl phosphate reductase.